The primary structure comprises 199 residues: ATP-dependent Clp protease proteolytic subunit (199 aa).

The active-site Nucleophile is Ser102. The active site involves His127.

Belongs to the peptidase S14 family. Fourteen ClpP subunits assemble into 2 heptameric rings which stack back to back to give a disk-like structure with a central cavity, resembling the structure of eukaryotic proteasomes.

Its subcellular location is the cytoplasm. The enzyme catalyses Hydrolysis of proteins to small peptides in the presence of ATP and magnesium. alpha-casein is the usual test substrate. In the absence of ATP, only oligopeptides shorter than five residues are hydrolyzed (such as succinyl-Leu-Tyr-|-NHMec, and Leu-Tyr-Leu-|-Tyr-Trp, in which cleavage of the -Tyr-|-Leu- and -Tyr-|-Trp bonds also occurs).. In terms of biological role, cleaves peptides in various proteins in a process that requires ATP hydrolysis. Has a chymotrypsin-like activity. Plays a major role in the degradation of misfolded proteins. The sequence is that of ATP-dependent Clp protease proteolytic subunit from Pseudothermotoga lettingae (strain ATCC BAA-301 / DSM 14385 / NBRC 107922 / TMO) (Thermotoga lettingae).